Consider the following 692-residue polypeptide: MTREFSLENTRNIGIMAHIDAGKTTATERILYYTGRIHKIGETHEGASQMDWMEQEQERGITITSAATTAQWKGHRVNIIDTPGHVDFTVEVERSLRVLDGAVAVLDAQSGVEPQTETVWRQATTYGVPRIVFVNKMDKIGADFLYSVGTIHDRLQANAHPIQLPIGAEDEFNGIIDLVEECAYMYGNDLGTDIERVEIPEEHKELAEEYRGKLIEAVAELDEEMMMKYLEGEEITVEELKAGIRKATTSVEFFPVICGSAFKNKGVQILLDAVIDYLPSPLDVPAIKGTLPDTDEEVERKSSDEEPFAALAFKIMTDPYVGKLTFFRVYSGVLNSGSYVKNSTKGKRERVGRILQMHANSREEISTVYAGDIAAAVGLKDTTTGDTLCDEKSLVILESMEFPEPVISVAIEPKSKADQDKMGTALSKLSEEDPTFRAHTDQETGQTIIAGMGELHLDIIVDRMRREFKVEANVGAPQVAYRETFRAAAKVEGKFARQSGGRGQFGHVWIEFAPNEEGKGFEFENKIVGGVVPREYIPAVGAGLEDSLKNGVLAGYPLVDIKAALVDGSYHDVDSSEMAFKIAASMALKAAVSKCNPVILEPMMKVEVVIPEEYMGDIMGDVTSRRGRVEGMEARGNAQVVRAMVPLSEMFGYATALRSNTQGRGTFSMTFDHYEEVPKSVSEEIIKKNKGE.

In terms of domain architecture, tr-type G spans 8–282 (ENTRNIGIMA…AVIDYLPSPL (275 aa)). GTP contacts are provided by residues 17-24 (AHIDAGKT), 81-85 (DTPGH), and 135-138 (NKMD).

The protein belongs to the TRAFAC class translation factor GTPase superfamily. Classic translation factor GTPase family. EF-G/EF-2 subfamily.

Its subcellular location is the cytoplasm. Functionally, catalyzes the GTP-dependent ribosomal translocation step during translation elongation. During this step, the ribosome changes from the pre-translocational (PRE) to the post-translocational (POST) state as the newly formed A-site-bound peptidyl-tRNA and P-site-bound deacylated tRNA move to the P and E sites, respectively. Catalyzes the coordinated movement of the two tRNA molecules, the mRNA and conformational changes in the ribosome. The protein is Elongation factor G of Bacillus cereus (strain G9842).